The primary structure comprises 222 residues: Eukaryotic translation initiation factor 3 subunit K (222 aa).

One can recognise a PCI domain in the interval Tyr-46–Lys-208.

The protein belongs to the eIF-3 subunit K family. In terms of assembly, component of the eukaryotic translation initiation factor 3 (eIF-3) complex. The eIF-3 complex interacts with pix.

The protein resides in the cytoplasm. Its function is as follows. Component of the eukaryotic translation initiation factor 3 (eIF-3) complex, which is involved in protein synthesis of a specialized repertoire of mRNAs and, together with other initiation factors, stimulates binding of mRNA and methionyl-tRNAi to the 40S ribosome. The eIF-3 complex specifically targets and initiates translation of a subset of mRNAs involved in cell proliferation. This chain is Eukaryotic translation initiation factor 3 subunit K, found in Drosophila mojavensis (Fruit fly).